The following is a 648-amino-acid chain: Zinc finger protein 202 (648 aa).

A Glycyl lysine isopeptide (Lys-Gly) (interchain with G-Cter in SUMO2) cross-link involves residue lysine 22. Residues 46–127 (HQNFRRFRYQ…VTLVEGLQKQ (82 aa)) enclose the SCAN box domain. The interval 146 to 221 (SEETVHLGVE…PDLPAERSSG (76 aa)) is disordered. Residues 165–182 (PVQSSTPEQSPEETTQSP) show a composition bias toward polar residues. Positions 237–308 (VTFKDVAVCF…DIQEPQETQE (72 aa)) constitute a KRAB domain. C2H2-type zinc fingers lie at residues 397 to 419 (HDCSVCGKSFTCNSHLVRHLRTH) and 425 to 447 (YKCMECGKSYTRSSHLARHQKVH). Residues lysine 454 and lysine 460 each participate in a glycyl lysine isopeptide (Lys-Gly) (interchain with G-Cter in SUMO2) cross-link. The residue at position 466 (serine 466) is a Phosphoserine. The C2H2-type 3 zinc finger occupies 481 to 503 (YRCDDCGKHFRWTSDLVRHQRTH). Residues lysine 507 and lysine 521 each participate in a glycyl lysine isopeptide (Lys-Gly) (interchain with G-Cter in SUMO2) cross-link. C2H2-type zinc fingers lie at residues 509-531 (FFCTICGKSFSQKSVLTTHQRIH), 537-559 (YLCGECGEDFSEHRRYLAHRKTH), 565-587 (YLCSECGRCFTHSAAFAKHLRGH), 593-615 (CRCNECGKSFSRRDHLVRHQRTH), and 621-643 (FTCPTCGKSFSRGYHLIRHQRTH).

As to quaternary structure, interacts with SDP1. In terms of tissue distribution, highly expressed in testis. Also expressed in breast carcinoma cell lines.

It is found in the nucleus. Its function is as follows. Transcriptional repressor that binds to elements found predominantly in genes that participate in lipid metabolism. Among its targets are structural components of lipoprotein particles (apolipoproteins AIV, CIII, and E), enzymes involved in lipid processing (lipoprotein lipase, lecithin cholesteryl ester transferase), transporters involved in lipid homeostasis (ABCA1, ABCG1), and several genes involved in processes related to energy metabolism and vascular disease. The polypeptide is Zinc finger protein 202 (ZNF202) (Homo sapiens (Human)).